We begin with the raw amino-acid sequence, 725 residues long: MFKVFGFGAKEEIPELSQEEKTKAILKQAHDFEQALRAMDYVLDDNADEGLALLDESDAKEASDQTINALARGVIEFLEATLGFEAEEMKKASATLAKAEALSLKSRERAQKIGLKSSSLYPPGTVYAVTYTESCLLHALLMIFSESMMEAAKAILKLRKSYYMLQEILETIKAANKAKKLKITSGSEDKESTPATFITGGDAFNSVDIPYELTPEEQKDKDLLQFAEQIHSMRTKRLSGAHIGNSPAINRLRGELGLQAMEDLPEEEITDHKVLSDDIDLSQATIDEFVHSGVNLCFGILQVVISLLPPAIGAVLSVVGFRGSREEGLRLVWKATKQRNVHGCIGLLALMFYYDGPFQFTDDDFDIPAAVKDSSNSEDSEDEEMDGPTLLHPGKILEDALLQSRALFPNSALWLLNEARMLSGKGRLEEAVALMDSIDVSKIRMRQVKSLMIFDRAITLIHLHQYDRAAEDILSLLDISDWSHAFYTYFAGCCYLENWRMCEMGLMKSDKKDEYQKKAEELIFTSVNLLGKKTFKSKNLPLDRFILRKVEQFKAKKEELGVENPLDGIATSPVHEISYFYNGYNRMSEEHLELTKKMLTEYRNPAIEALDSDQELIKDLLVSLTLRRLGHIQEGCDILDEKVLPKFFSIQNGKVKYIKKTEDPWAYPTALYERALFTWKLEGMDGLPESKEWLLRAQGYADDYELSTRVGMKIKAAIDRVDHSL.

Thr-196 is subject to Phosphothreonine. Residues Ser-246, Ser-377, and Ser-380 each carry the phosphoserine modification.

Belongs to the IML2 family.

The protein localises to the cytoplasm. Its subcellular location is the nucleus. In terms of biological role, may be involved in mitochondrial DNA stability. The chain is IML2-like protein SCY_3392 from Saccharomyces cerevisiae (strain YJM789) (Baker's yeast).